The primary structure comprises 231 residues: Ribosomal RNA small subunit methyltransferase G (231 aa).

The S-adenosyl-L-methionine site is built by G85, F90, and R154.

It belongs to the methyltransferase superfamily. RNA methyltransferase RsmG family.

The protein resides in the cytoplasm. It catalyses the reaction guanosine(527) in 16S rRNA + S-adenosyl-L-methionine = N(7)-methylguanosine(527) in 16S rRNA + S-adenosyl-L-homocysteine. In terms of biological role, specifically methylates the N7 position of guanine in position 527 of 16S rRNA. The protein is Ribosomal RNA small subunit methyltransferase G of Rhodopseudomonas palustris (strain BisA53).